Consider the following 407-residue polypeptide: Betaine--homocysteine S-methyltransferase 1 (407 aa).

The region spanning 11-314 (KGILERLNAG…YHIRAIAEEL (304 aa)) is the Hcy-binding domain. Lys40, Lys93, and Lys98 each carry N6-succinyllysine. Residue Cys217 participates in Zn(2+) binding. N6-succinyllysine is present on residues Lys232 and Lys241. The Zn(2+) site is built by Cys299 and Cys300. Phosphoserine is present on Ser330. Residues Lys340 and Lys377 each carry the N6-succinyllysine modification.

Homotetramer. Zn(2+) is required as a cofactor.

The protein resides in the cytoplasm. The protein localises to the cytosol. Its subcellular location is the nucleus. The catalysed reaction is L-homocysteine + glycine betaine = N,N-dimethylglycine + L-methionine. The protein operates within amine and polyamine degradation; betaine degradation; sarcosine from betaine: step 1/2. It functions in the pathway amino-acid biosynthesis; L-methionine biosynthesis via de novo pathway; L-methionine from L-homocysteine (BhmT route): step 1/1. In terms of biological role, involved in the regulation of homocysteine metabolism. Converts betaine and homocysteine to dimethylglycine and methionine, respectively. This reaction is also required for the irreversible oxidation of choline. This Mus musculus (Mouse) protein is Betaine--homocysteine S-methyltransferase 1 (Bhmt).